The primary structure comprises 151 residues: Putative transcriptional regulatory protein TK2151 (151 aa).

Belongs to the Tfx family.

Putative transcriptional regulator. In Thermococcus kodakarensis (strain ATCC BAA-918 / JCM 12380 / KOD1) (Pyrococcus kodakaraensis (strain KOD1)), this protein is Putative transcriptional regulatory protein TK2151.